Consider the following 2192-residue polypeptide: Non-reducing polyketide synthase 1 (2192 aa).

Residues 5–243 (LLLGDQTADQ…VSIPIYAPYH (239 aa)) form an N-terminal acylcarrier protein transacylase domain (SAT) region. In terms of domain architecture, Ketosynthase family 3 (KS3) spans 374–806 (NDKIAIVGMS…GGNTSLLLED (433 aa)). Catalysis depends on for beta-ketoacyl synthase activity residues Cys546, His681, and His724. Residues 905-1218 (FCFTGQGSQY…ANSMCALFLA (314 aa)) are malonyl-CoA:ACP transacylase (MAT) domain. The active-site For acyl/malonyl transferase activity is Ser993. Residues 1293-1610 (SCQKIIDEEF…RKVLNTFLPP (318 aa)) form a product template (PT) domain region. Positions 1295 to 1430 (QKIIDEEFSA…CTVKFEDINT (136 aa)) are N-terminal hotdog fold. The region spanning 1295 to 1605 (QKIIDEEFSA…FQKIPRKVLN (311 aa)) is the PKS/mFAS DH domain. Catalysis depends on His1327, which acts as the Proton acceptor; for dehydratase activity. Residues 1458–1605 (AHVIGRGLAY…FQKIPRKVLN (148 aa)) form a C-terminal hotdog fold region. Catalysis depends on Asp1518, which acts as the Proton donor; for dehydratase activity. Residues 1639–1668 (TQAQPAKAVPKQVTVAAPTPKAAPKKADLK) are disordered. Residues 1670-1747 (PAGPTIITRV…EMKKFFSQYD (78 aa)) enclose the Carrier 1 domain. An O-(pantetheine 4'-phosphoryl)serine modification is found at Ser1707. The disordered stretch occupies residues 1748–1788 (GEVGTPEQDDSDSDSETSGDASTPMSEVGTPMTIPSSAVSE). The segment covering 1754–1764 (EQDDSDSDSET) has biased composition (acidic residues). The Carrier 2 domain occupies 1798-1875 (APASGEVSIA…DVENALDMRP (78 aa)). O-(pantetheine 4'-phosphoryl)serine is present on Ser1835. The tract at residues 1913 to 2164 (SKYPAATSVL…SMMKPPHVSI (252 aa)) is thioesterase (TE) domain.

Non-reducing polyketide synthase; part of the gene cluster that mediates the biosynthesis of elsinochromes, pigments consisting of at least four interconvertible tautomers (A, B, C and D) that have a core phenolic quinone to which various side chains are attached and which play an important role in fungal pathogenesis. The non-reducing polyketide synthase PKS1 was proposed to iteratively catalyze decarboxylation between acetyl-CoA and malonyl-CoA subunits for polyketide chain elongation. The released polyketide undergoes cyclization to form an aromatic ring, and proceeds via serial modification steps to produce the heptaketide back- bone of elsinochrome. As elsinochrome has a symmetrical structure, two identical heptaketides are fused to form a core 1,2-dihydrobenzo-perylene ring structure, which can then be successively modified to produce the various derivatives of elsinochrome. Some of these reactions may be cooperatively carried out, at least in part, by the products of RDT1, OXR1 and PKS1. PRF1, embedded within the elsinochrome cluster possibly functions to stabilize some of the biosynthetic enzymes required for elsinochrome production. As prefoldin is a hexamer containing 2 a and 4 b subunits, additional prefoldin subunits, whose coding genes may not immediately link to the elsinochrome biosynthetic gene cluster, are required to fulfill the chaperone function. In addition, no methyltransferase-coding gene exists within the biosynthetic gene cluster, even though elsinochrome has four methyl groups at positions C3, C7, C8 and C12. Apparently, the identified gene cluster does not contain the entire entourage of genes responsible for elsinochrome biosynthesis. Once elsinochrome is synthesized, it must be exported outside the fungal cells, which is probably accomplished by the ECT1 transporter, to avoid toxicity. This is Non-reducing polyketide synthase 1 from Elsinoe fawcettii (Citrus scab fungus).